The following is a 402-amino-acid chain: Bacteriochlorophyllide c C-7(1)-hydroxylase (402 aa).

Residues 104–359 enclose the Radical SAM core domain; it reads VIGMNQDIIN…IKYQDRFDMP (256 aa). [4Fe-4S] cluster-binding residues include Cys-120, Cys-129, and Cys-132.

It belongs to the radical SAM superfamily. It depends on [4Fe-4S] cluster as a cofactor.

The enzyme catalyses a bacteriochlorophyllide c + 2 S-adenosyl-L-methionine + H2O = a bacteriochlorophyllide e + 2 5'-deoxyadenosine + 2 L-methionine + 2 H(+). The catalysed reaction is a bacteriochlorophyllide d + 2 S-adenosyl-L-methionine + H2O = a bacteriochlorophyllide f + 2 5'-deoxyadenosine + 2 L-methionine + 2 H(+). It participates in porphyrin-containing compound metabolism; bacteriochlorophyll biosynthesis. In terms of biological role, involved in the biosynthesis of bacteriochlorophyll e (BChl e). Catalyzes two consecutive hydroxylation reactions of the C-7 methyl group of bacteriochlorophyllide c (BChlide c) to form a geminal diol intermediate that spontaneously dehydrates to produce the formyl group of bacteriochlorophyllide e (BChlide e). Also able to catalyze the same reaction for bacteriochlorophyllide d (BChlide d) to give rise to bacteriochlorophyllide f (BChlide f). This chain is Bacteriochlorophyllide c C-7(1)-hydroxylase, found in Chlorobaculum limnaeum.